The chain runs to 388 residues: Chorismate synthase (388 aa).

NADP(+) is bound by residues R39 and R45. FMN-binding positions include 130–132, 251–252, G296, 311–315, and R337; these read RSS, NA, and KPIPT.

This sequence belongs to the chorismate synthase family. In terms of assembly, homotetramer. FMNH2 serves as cofactor.

The enzyme catalyses 5-O-(1-carboxyvinyl)-3-phosphoshikimate = chorismate + phosphate. The protein operates within metabolic intermediate biosynthesis; chorismate biosynthesis; chorismate from D-erythrose 4-phosphate and phosphoenolpyruvate: step 7/7. Its function is as follows. Catalyzes the anti-1,4-elimination of the C-3 phosphate and the C-6 proR hydrogen from 5-enolpyruvylshikimate-3-phosphate (EPSP) to yield chorismate, which is the branch point compound that serves as the starting substrate for the three terminal pathways of aromatic amino acid biosynthesis. This reaction introduces a second double bond into the aromatic ring system. The protein is Chorismate synthase of Streptococcus pyogenes serotype M28 (strain MGAS6180).